Reading from the N-terminus, the 184-residue chain is Photosystem I assembly protein Ycf4 (184 aa).

Transmembrane regions (helical) follow at residues 22 to 42 (FGWACILFLGSLGFLVVGASS) and 57 to 77 (IVFFPQGIVMSFYGIAGLFIS).

It belongs to the Ycf4 family.

The protein resides in the plastid. It is found in the chloroplast thylakoid membrane. Its function is as follows. Seems to be required for the assembly of the photosystem I complex. The protein is Photosystem I assembly protein Ycf4 of Acorus calamus (Sweet flag).